A 406-amino-acid chain; its full sequence is 4-hydroxy-3-methylbut-2-en-1-yl diphosphate synthase (ferredoxin) (406 aa).

Positions 315, 318, 349, and 356 each coordinate [4Fe-4S] cluster.

It belongs to the IspG family. Requires [4Fe-4S] cluster as cofactor.

It carries out the reaction (2E)-4-hydroxy-3-methylbut-2-enyl diphosphate + 2 oxidized [2Fe-2S]-[ferredoxin] + H2O = 2-C-methyl-D-erythritol 2,4-cyclic diphosphate + 2 reduced [2Fe-2S]-[ferredoxin] + H(+). The protein operates within isoprenoid biosynthesis; isopentenyl diphosphate biosynthesis via DXP pathway; isopentenyl diphosphate from 1-deoxy-D-xylulose 5-phosphate: step 5/6. Functionally, converts 2C-methyl-D-erythritol 2,4-cyclodiphosphate (ME-2,4cPP) into 1-hydroxy-2-methyl-2-(E)-butenyl 4-diphosphate. The polypeptide is 4-hydroxy-3-methylbut-2-en-1-yl diphosphate synthase (ferredoxin) (Trichodesmium erythraeum (strain IMS101)).